A 504-amino-acid polypeptide reads, in one-letter code: Glucosaminyl-phosphatidylinositol-acyltransferase PIGW (504 aa).

Residues 1-21 (MSEKQMKEAFVSNLNGTTVLE) are Lumenal-facing. Asparagine 15 carries N-linked (GlcNAc...) asparagine glycosylation. Residues 22–42 (ITQGLCFPAFCILCRGFLIIF) traverse the membrane as a helical segment. Topologically, residues 43–56 (SQYLCSFSPTWKTR) are cytoplasmic. Residues 57-75 (FLTDFVVLIVPMVATLTIW) traverse the membrane as a helical segment. The Lumenal segment spans residues 76-81 (ASFILL). Residues 82 to 98 (ELLGVIIFGAGLLYQIY) traverse the membrane as a helical segment. Residues 99–131 (RRRTCYARLPFLKILEKFLNISLESEYNPAISC) lie on the Cytoplasmic side of the membrane. The helical transmembrane segment at 132–152 (FRVITSAFTAIAILAVDFPLF) threads the bilayer. The Lumenal portion of the chain corresponds to 153-162 (PRRFAKTELY). A helical membrane pass occupies residues 163–183 (GTGAMDFGVGGFVFGSAMVCL). At 184 to 202 (EVRRRKYMEGSKLHYFTNS) the chain is on the cytoplasmic side. Residues 203 to 223 (LYSVWPLVFLGIGRLAIIKSI) traverse the membrane as a helical segment. Topologically, residues 224 to 237 (GYQEHLTEYGVHWN) are lumenal. A helical transmembrane segment spans residues 238–258 (FFFTIIVVKLITPLLLIIFPL). Residues 259 to 260 (NK) are Cytoplasmic-facing. A helical transmembrane segment spans residues 261–281 (SWIIALGITVLYQLALDFTSL). The Lumenal segment spans residues 282 to 305 (KRLILYGTDGSGTRVGLLNANREG). Residues 306-326 (IISTLGYVAIHMAGVQTGLYM) traverse the membrane as a helical segment. Over 327 to 338 (HKNRSHIKDLIK) the chain is Cytoplasmic. The chain crosses the membrane as a helical span at residues 339–359 (VACFLLLAAISLFISLYVVQV). Residues 360 to 370 (NVEAVSRRMAN) lie on the Lumenal side of the membrane. A helical transmembrane segment spans residues 371 to 391 (LAFCIWIVASSLILLSSLLLG). The Cytoplasmic segment spans residues 392–448 (DIILSFAKFLIKGALVPCSWKLIQSPVTNKKHSESLVPEAERMEPSLCLITALNRKQ). Serine 416 bears the Phosphoserine mark. A helical transmembrane segment spans residues 449–469 (LIFFLLSNITTGLINLMVDTL). Over 470 to 473 (HSST) the chain is Lumenal. A helical membrane pass occupies residues 474 to 494 (LWALFVVNLYMFSNCLIVYVL). At 495–504 (YLQDKTVQFW) the chain is on the cytoplasmic side.

The protein belongs to the PIGW family.

It is found in the endoplasmic reticulum membrane. The protein operates within glycolipid biosynthesis; glycosylphosphatidylinositol-anchor biosynthesis. Acyltransferase that catalyzes the acyl transfer from an acyl-CoA at the 2-OH position of the inositol ring of glucosaminyl phosphatidylinositol (GlcN-PI) to generate glucosaminyl acyl phosphatidylinositol (GlcN-(acyl)PI) and participates in the fourth step of GPI-anchor biosynthesis. Required for the transport of GPI-anchored proteins to the plasma membrane. Acetylation during GPI-anchor biosynthesis is not essential for the subsequent mannosylation and is usually removed soon after the attachment of GPIs to proteins. The sequence is that of Glucosaminyl-phosphatidylinositol-acyltransferase PIGW from Homo sapiens (Human).